A 468-amino-acid chain; its full sequence is UDP-N-acetylmuramate--L-alanine ligase (468 aa).

114–120 (GTHGKTT) serves as a coordination point for ATP.

Belongs to the MurCDEF family.

It is found in the cytoplasm. The catalysed reaction is UDP-N-acetyl-alpha-D-muramate + L-alanine + ATP = UDP-N-acetyl-alpha-D-muramoyl-L-alanine + ADP + phosphate + H(+). Its pathway is cell wall biogenesis; peptidoglycan biosynthesis. Cell wall formation. This is UDP-N-acetylmuramate--L-alanine ligase from Methylorubrum extorquens (strain PA1) (Methylobacterium extorquens).